A 216-amino-acid polypeptide reads, in one-letter code: Putative F-box protein At2g03610 (216 aa).

In terms of domain architecture, F-box spans 19 to 69; sequence NQDWSKLCPDLLRPILESLSSIDFHRAKTVCSDWYSVWKTCKGYDSKWNQN.

This Arabidopsis thaliana (Mouse-ear cress) protein is Putative F-box protein At2g03610.